Consider the following 1051-residue polypeptide: Carbamoyl phosphate synthase large chain (1051 aa).

Positions 1-399 are carboxyphosphate synthetic domain; the sequence is MKETPKKVLV…SLQKAVRMLD (399 aa). ATP contacts are provided by Arg127, Arg167, Gly173, Gly174, Lys206, Leu208, Glu213, Gly239, Val240, His241, Gln282, and Glu296. The 195-residue stretch at 131–325 folds into the ATP-grasp 1 domain; it reads RETMIENNLP…LAYVSAKLAL (195 aa). Mg(2+) is bound by residues Gln282, Glu296, and Asn298. Residues Gln282, Glu296, and Asn298 each contribute to the Mn(2+) site. Residues 400 to 548 are oligomerization domain; that stretch reads IGEPGVVGGK…LTYNGTEDDL (149 aa). Positions 549 to 930 are carbamoyl phosphate synthetic domain; the sequence is EFSQGNKLLI…LKSWLSSIPN (382 aa). An ATP-grasp 2 domain is found at 673–863; it reads SKLLDKLGIS…LINEAMKAIF (191 aa). Positions 709, 748, 750, 755, 779, 780, 781, 782, 822, and 834 each coordinate ATP. Residues Gln822, Glu834, and Asn836 each contribute to the Mg(2+) site. Residues Gln822, Glu834, and Asn836 each coordinate Mn(2+). One can recognise an MGS-like domain in the interval 930 to 1051; that stretch reads NRIPNKNGIA…FEISEYGGGI (122 aa). Residues 931–1051 form an allosteric domain region; that stretch reads RIPNKNGIAL…FEISEYGGGI (121 aa).

The protein belongs to the CarB family. As to quaternary structure, composed of two chains; the small (or glutamine) chain promotes the hydrolysis of glutamine to ammonia, which is used by the large (or ammonia) chain to synthesize carbamoyl phosphate. Tetramer of heterodimers (alpha,beta)4. Mg(2+) serves as cofactor. Mn(2+) is required as a cofactor.

It catalyses the reaction hydrogencarbonate + L-glutamine + 2 ATP + H2O = carbamoyl phosphate + L-glutamate + 2 ADP + phosphate + 2 H(+). The catalysed reaction is hydrogencarbonate + NH4(+) + 2 ATP = carbamoyl phosphate + 2 ADP + phosphate + 2 H(+). Its pathway is amino-acid biosynthesis; L-arginine biosynthesis; carbamoyl phosphate from bicarbonate: step 1/1. It functions in the pathway pyrimidine metabolism; UMP biosynthesis via de novo pathway; (S)-dihydroorotate from bicarbonate: step 1/3. Functionally, large subunit of the glutamine-dependent carbamoyl phosphate synthetase (CPSase). CPSase catalyzes the formation of carbamoyl phosphate from the ammonia moiety of glutamine, carbonate, and phosphate donated by ATP, constituting the first step of 2 biosynthetic pathways, one leading to arginine and/or urea and the other to pyrimidine nucleotides. The large subunit (synthetase) binds the substrates ammonia (free or transferred from glutamine from the small subunit), hydrogencarbonate and ATP and carries out an ATP-coupled ligase reaction, activating hydrogencarbonate by forming carboxy phosphate which reacts with ammonia to form carbamoyl phosphate. The chain is Carbamoyl phosphate synthase large chain from Saccharolobus islandicus (strain L.S.2.15 / Lassen #1) (Sulfolobus islandicus).